Consider the following 226-residue polypeptide: MDILISSLKSLGYSRTSKSLDSGPLVVHAVAGAGKSTALRKLILRHPTFTVHTLGVPDKVSIRTRGIQKPGPIPEGNFAILDEYTLDNTTRNSYQALFADPYQAPEFSLEPHFYLETSFRVPRKVADLIAGCGFDFETNSQEEGHLEITGIFKGPLLGKVIAIDEESETTLSRHGVEFVKPCQVTGLELKVVTIVSAAPIEEIGQSTAFYNAITRSKGLTYVRAGT.

The (+)RNA virus helicase ATP-binding domain occupies Met1–Leu115. One can recognise a (+)RNA virus helicase C-terminal domain in the interval Glu116–Thr226.

The protein belongs to the Tymovirales TGBp1 protein family. Homodimer and homooligomer. Interacts with capsid protein. Interacts with host AGO1; this interaction targets the host protein for degradation, thereby suppressing the antiviral RNA silencing.

It localises to the host cytoplasm. Transports viral genome to neighboring plant cells directly through plasmosdesmata, without any budding. The movement protein allows efficient cell to cell propagation, by bypassing the host cell wall barrier. Increases plasmodesma size exclusion limit. Acts as a suppressor of RNA-mediated gene silencing, also known as post-transcriptional gene silencing (PTGS), a mechanism of plant viral defense that limits the accumulation of viral RNAs. The polypeptide is Movement and silencing protein TGBp1 (Potato virus X (strain X3) (PVX)).